Reading from the N-terminus, the 364-residue chain is Ribosomal RNA large subunit methyltransferase M (364 aa).

S-adenosyl-L-methionine is bound by residues S198, 231–234, D250, D270, and D286; that span reads APGG. The Proton acceptor role is filled by K315.

The protein belongs to the class I-like SAM-binding methyltransferase superfamily. RNA methyltransferase RlmE family. RlmM subfamily. Monomer.

It localises to the cytoplasm. The enzyme catalyses cytidine(2498) in 23S rRNA + S-adenosyl-L-methionine = 2'-O-methylcytidine(2498) in 23S rRNA + S-adenosyl-L-homocysteine + H(+). Catalyzes the 2'-O-methylation at nucleotide C2498 in 23S rRNA. The chain is Ribosomal RNA large subunit methyltransferase M from Azoarcus sp. (strain BH72).